We begin with the raw amino-acid sequence, 538 residues long: Translation initiation factor IF-3, chloroplastic (538 aa).

The transit peptide at 1–140 (MVRSSCLQCD…VTQRKEIAVF (140 aa)) directs the protein to the chloroplast. Positions 141–290 (SASGQAAEPE…EEVEEEQEVL (150 aa)) are head. Disordered regions lie at residues 146–165 (AAEP…PAAK) and 188–210 (RTDS…NWPS). Residues 291 to 474 (SWADRRRALA…LILNLAPAGE (184 aa)) are IF-3 like. The tract at residues 484–538 (AERDRKAAAEEEGEGDDLDFVDENEDEDVEGEGEEEEAEELEEETAEGTEVPTRS) is disordered. A compositionally biased stretch (acidic residues) spans 493–530 (EEEGEGDDLDFVDENEDEDVEGEGEEEEAEELEEETAE).

This sequence belongs to the IF-3 family. In terms of assembly, monomer. Post-translationally, the N-terminus is blocked.

Its subcellular location is the plastid. The protein localises to the chloroplast. Functionally, involved in chloroplast protein synthesis. It enhances the poly(A,U,G)-dependent binding of the initiator tRNA to chloroplast 30S subunits. The sequence is that of Translation initiation factor IF-3, chloroplastic from Euglena gracilis.